The primary structure comprises 61 residues: Photosystem II reaction center protein Z (61 aa).

The next 2 helical transmembrane spans lie at 8 to 28 (ALLVLVLYSLLLVVAVPVLFS) and 41 to 61 (LVGSLLWVLMVIGVGVLSFFK).

It belongs to the PsbZ family. In terms of assembly, PSII is composed of 1 copy each of membrane proteins PsbA, PsbB, PsbC, PsbD, PsbE, PsbF, PsbH, PsbI, PsbJ, PsbK, PsbL, PsbM, PsbT, PsbX, PsbY, PsbZ, Psb30/Ycf12, peripheral proteins PsbO, CyanoQ (PsbQ), PsbU, PsbV and a large number of cofactors. It forms dimeric complexes.

It localises to the cellular thylakoid membrane. Functionally, may control the interaction of photosystem II (PSII) cores with the light-harvesting antenna, regulates electron flow through the 2 photosystem reaction centers. PSII is a light-driven water plastoquinone oxidoreductase, using light energy to abstract electrons from H(2)O, generating a proton gradient subsequently used for ATP formation. The polypeptide is Photosystem II reaction center protein Z (Synechococcus sp. (strain JA-3-3Ab) (Cyanobacteria bacterium Yellowstone A-Prime)).